Here is a 249-residue protein sequence, read N- to C-terminus: Proteasome subunit alpha type-7-1 (249 aa).

The residue at position 177 (Ser177) is a Phosphoserine.

The protein belongs to the peptidase T1A family. In terms of assembly, the 26S proteasome consists of a 20S proteasome core and two 19S regulatory subunits. The 20S proteasome core is composed of 28 subunits that are arranged in four stacked rings, resulting in a barrel-shaped structure. The two end rings are each formed by seven alpha subunits, and the two central rings are each formed by seven beta subunits. The catalytic chamber with the active sites is on the inside of the barrel. Interacts with PI31; this interaction is reduced by PI31 ADP-ribosylation.

Its subcellular location is the cytoplasm. It is found in the nucleus. Functionally, the proteasome is a multicatalytic proteinase complex which is characterized by its ability to cleave peptides with Arg, Phe, Tyr, Leu, and Glu adjacent to the leaving group at neutral or slightly basic pH. The proteasome has an ATP-dependent proteolytic activity. The polypeptide is Proteasome subunit alpha type-7-1 (Prosalpha4) (Drosophila melanogaster (Fruit fly)).